Consider the following 192-residue polypeptide: Ion-translocating oxidoreductase complex subunit B (192 aa).

The tract at residues 1 to 26 (MNAFWIAVAAVSLLGLAFGAILGYAS) is hydrophobic. A 4Fe-4S domain is found at 32 to 91 (EDDPVVEKIDEILPQSQCGQCGYPGCRPYAEAISCNGEKINRCAPGGEAVMLKIAELLNV). [4Fe-4S] cluster is bound by residues Cys49, Cys52, Cys57, Cys74, Cys117, Cys120, Cys123, Cys127, Cys147, Cys150, Cys153, and Cys157. 2 4Fe-4S ferredoxin-type domains span residues 108-137 (MVAV…GATR) and 138-167 (AMHT…LQPV).

The protein belongs to the 4Fe4S bacterial-type ferredoxin family. RnfB subfamily. As to quaternary structure, the complex is composed of six subunits: RsxA, RsxB, RsxC, RsxD, RsxE and RsxG. [4Fe-4S] cluster serves as cofactor.

It is found in the cell inner membrane. In terms of biological role, part of a membrane-bound complex that couples electron transfer with translocation of ions across the membrane. Required to maintain the reduced state of SoxR. This Escherichia coli O6:H1 (strain CFT073 / ATCC 700928 / UPEC) protein is Ion-translocating oxidoreductase complex subunit B.